Here is a 120-residue protein sequence, read N- to C-terminus: Flagellar protein FliT (120 aa).

Residues 1–50 form a required for homodimerization region; sequence MNDSSLSLKKWHALSALSNTMLSLAQSGKWDELIEQEVAYVSLVEKISIT. Residues 59 to 97 form a fliD binding region; that stretch reads IQDQAMVMLNNVLQNEMTLKTLLQERMDELHGLMAQTGK.

It belongs to the FliT family. Homodimer. Interacts with FliD and FlhC.

It is found in the cytoplasm. The protein resides in the cytosol. In terms of biological role, dual-function protein that regulates the transcription of class 2 flagellar operons and that also acts as an export chaperone for the filament-capping protein FliD. As a transcriptional regulator, acts as an anti-FlhDC factor; it directly binds FlhC, thus inhibiting the binding of the FlhC/FlhD complex to class 2 promoters, resulting in decreased expression of class 2 flagellar operons. As a chaperone, effects FliD transition to the membrane by preventing its premature polymerization, and by directing it to the export apparatus. The polypeptide is Flagellar protein FliT (Enterobacter sp. (strain 638)).